Here is a 341-residue protein sequence, read N- to C-terminus: Protein phosphatase methylesterase 1 (341 aa).

The interval methionine 1–lysine 24 is disordered. Over residues serine 9 to serine 20 the composition is skewed to polar residues. Active-site residues include serine 153, aspartate 178, and histidine 304.

This sequence belongs to the AB hydrolase superfamily.

The enzyme catalyses [phosphatase 2A protein]-C-terminal L-leucine methyl ester + H2O = [phosphatase 2A protein]-C-terminal L-leucine + methanol + H(+). In terms of biological role, demethylates proteins that have been reversibly carboxymethylated. Demethylates the phosphatase PP2A catalytic subunit. The protein is Protein phosphatase methylesterase 1 (ppe1) of Schizosaccharomyces pombe (strain 972 / ATCC 24843) (Fission yeast).